The primary structure comprises 291 residues: Segregation and condensation protein B (291 aa).

It belongs to the ScpB family. In terms of assembly, homodimer. Homodimerization may be required to stabilize the binding of ScpA to the Smc head domains. Component of a cohesin-like complex composed of ScpA, ScpB and the Smc homodimer, in which ScpA and ScpB bind to the head domain of Smc. The presence of the three proteins is required for the association of the complex with DNA.

It localises to the cytoplasm. Participates in chromosomal partition during cell division. May act via the formation of a condensin-like complex containing Smc and ScpA that pull DNA away from mid-cell into both cell halves. This chain is Segregation and condensation protein B, found in Mycoplasmoides gallisepticum (strain R(low / passage 15 / clone 2)) (Mycoplasma gallisepticum).